The following is a 1688-amino-acid chain: Voltage-dependent L-type calcium channel subunit alpha-1S (1688 aa).

The disordered stretch occupies residues 1-24 (MDAMGSAAEEGTQKKKRRPLVPPP). Over 1–51 (MDAMGSAAEEGTQKKKRRPLVPPPPRPPRALFCLGLQNPFRKFCINIVEWK) the chain is Cytoplasmic. The stretch at 38–335 (NPFRKFCINI…LVLGVLSGEF (298 aa)) is one I repeat. A helical transmembrane segment spans residues 52 to 70 (PFEMIILLTIFANCVALAI). Over 71–88 (FLPMPEDDTNSTNSVLEK) the chain is Extracellular. N-linked (GlcNAc...) asparagine glycosylation is present at Asn-80. A helical membrane pass occupies residues 89-108 (VEYIFLFIFTIESFLKIVAY). Over 109–120 (GFILHTDAYLRN) the chain is Cytoplasmic. The helical transmembrane segment at 121-139 (GWNILDFTIVSVGVFSVLL) threads the bilayer. The Extracellular portion of the chain corresponds to 140 to 158 (EQISKLQGLPAPGKSSGFN). Residues 159–177 (VKALRAFRVLRPLRLVSGV) form a helical membrane-spanning segment. Over 178-196 (PSLQVVLNSIIKAMIPLLH) the chain is Cytoplasmic. The chain crosses the membrane as a helical span at residues 197-216 (IALLVLFMIIIYAIVGLELF). Residues 217-307 (SGKMHKTCYF…WVNDAIGNEW (91 aa)) lie on the Extracellular side of the membrane. N-linked (GlcNAc...) asparagine glycosylation is present at Asn-255. Residue Glu-290 coordinates Ca(2+). The chain crosses the membrane as a helical span at residues 308–332 (PWIYFVSLILLGSFFVLNLVLGVLS). The Cytoplasmic segment spans residues 333 to 431 (GEFTKEREKA…RKSRDLVKSR (99 aa)). Residues 355–372 (QAMDEDLRGYLDWITHAE) form a binding to the beta subunit region. An II repeat occupies 417–663 (HRLLRRKSRD…VFLAIAVDNL (247 aa)). A helical transmembrane segment spans residues 432–450 (FFYWLVIIIILLNTVIIAT). Residues 451–465 (EHHHQPDSLTKAQDI) lie on the Extracellular side of the membrane. The chain crosses the membrane as a helical span at residues 466–485 (ANEVLLALFTMEMIVKIYAL). The Cytoplasmic segment spans residues 486-493 (GFQSYFMS). A helical membrane pass occupies residues 494 to 512 (LFNRFDSFVVCTGLLEVML). Topologically, residues 513–522 (VASDIMSPLG) are extracellular. The chain crosses the membrane as a helical span at residues 523–541 (ISVLRCIRLLRIFKITRYW). Topologically, residues 542-560 (TSLNNLVASLLNSVRSIAS) are cytoplasmic. The helical transmembrane segment at 561–580 (LLLLLFLFMIIFALLGMQMF) threads the bilayer. Residues 581-635 (GGKFDFEDLEVRRSTFDTFPQALITVFQILTGEDWTAVMYNGIMAYGGPTYSGMS) are Extracellular-facing. Position 613 (Glu-613) interacts with Ca(2+). Residues 636–660 (VCIYFIILFVCGNYILLNVFLAIAV) form a helical membrane-spanning segment. At 661–797 (DNLAEAENLT…VLCHRIINAT (137 aa)) the chain is on the cytoplasmic side. Disordered regions lie at residues 672-696 (AQKAKAEERKRKKLARANPDKTEEE) and 729-755 (EIKDPYPSADFPGDDEEEEPEIPISPR). Over residues 740–749 (PGDDEEEEPE) the composition is skewed to acidic residues. The III repeat unit spans residues 784–1066 (NKIRVLCHRI…IFVGFVIVTF (283 aa)). A helical transmembrane segment spans residues 798–816 (TFTNFILLFILLSSISLAA). The Extracellular segment spans residues 817–832 (EDPIQPESFRNKVLSK). Residues 833–852 (LDIVFTVIFTTEIVLKMTAY) traverse the membrane as a helical segment. The Cytoplasmic portion of the chain corresponds to 853 to 864 (GAFLHKGSFCRN). Residues 865 to 883 (SFNILDLSVVGVSLISMGI) form a helical membrane-spanning segment. The Extracellular segment spans residues 884–890 (ESSAISV). Residues 891-909 (VKILRVLRVLRPLRAINRA) traverse the membrane as a helical segment. Residues 910-928 (KGLKHVVQCLFVAIKTIGN) lie on the Cytoplasmic side of the membrane. Residues 929–948 (IVLVTTLLQFMFSCIGVQLF) traverse the membrane as a helical segment. Over 949-1038 (KGKFYSCTDT…MGPIYNYRIE (90 aa)) the chain is Extracellular. The dihydropyridine binding stretch occupies residues 986 to 1075 (RVWSHSDFHF…FQEQGEQEYK (90 aa)). Glu-1012 serves as a coordination point for Ca(2+). Residues 1039 to 1063 (IAVFFIVYIILIAFFMMNIFVGFVI) form a helical membrane-spanning segment. Topologically, residues 1064-1116 (VTFQEQGEQEYKDCELDKNQRQCVQYALKARPLRRYIPKNPHQYKIWYVVTSS) are cytoplasmic. Residues 1103-1371 (NPHQYKIWYV…LFVAVIMDNF (269 aa)) form an IV repeat. A helical membrane pass occupies residues 1117–1135 (YFEYLMFFLITLNTISLGM). At 1136–1150 (QHYGQTAEFSYMSDI) the chain is on the extracellular side. Residues 1151–1170 (LNVAFTGIFTVEMFLKLAAF) form a helical membrane-spanning segment. Residues 1171-1178 (KAKGYFGD) lie on the Cytoplasmic side of the membrane. The chain crosses the membrane as a helical span at residues 1179 to 1197 (PWNVFDFLIVIGSVIDVIL). At 1198 to 1218 (SEIDTPGIPATPGAEESSRIS) the chain is on the extracellular side. Residues 1219–1237 (ITFFRLFRVLRLVKLLSRG) traverse the membrane as a helical segment. Residues 1238-1256 (EGVRTLLWTFIKSFQALPY) are Cytoplasmic-facing. A helical membrane pass occupies residues 1257 to 1276 (VALLIVMLFFIYAVIGMQVF). Topologically, residues 1277 to 1343 (GKIALVDGTH…GEEYTCGTSF (67 aa)) are extracellular. Residues 1324-1390 (LCDPMSDFQP…LGPHHLDEFK (67 aa)) form a dihydropyridine binding region. Residues 1336 to 1379 (EYTCGTSFAYFYFISFYMLCAFLIINLFVAVIMDNFDYLTRDWS) are phenylalkylamine binding. Residues 1344–1368 (AYFYFISFYMLCAFLIINLFVAVIM) traverse the membrane as a helical segment. The Cytoplasmic portion of the chain corresponds to 1369 to 1688 (DNFDYLTRDW…TNSSISQATN (320 aa)). Disordered regions lie at residues 1635-1664 (PEPVFFPPPRRNRNTNNSTISRGLDQRLTT) and 1669-1688 (RVQQSEEQWDTNSSISQATN). Residues 1678–1688 (DTNSSISQATN) are compositionally biased toward polar residues.

The protein belongs to the calcium channel alpha-1 subunit (TC 1.A.1.11) family. In terms of assembly, multisubunit complex consisting of alpha-1, alpha-2, beta and delta subunits in a 1:1:1:1 ratio. The channel activity is directed by the pore-forming and voltage-sensitive alpha-1 subunit. In many cases, this subunit is sufficient to generate voltage-sensitive calcium channel activity. The auxiliary subunits beta and alpha-2/delta linked by a disulfide bridge regulate the channel activity. An additional gamma subunit is present only in skeletal muscle L-type channel. Post-translationally, phosphorylation by PKA stimulates the calcium channel function. Skeletal muscle specific.

The protein localises to the membrane. In terms of biological role, voltage-sensitive calcium channels (VSCC) mediate the entry of calcium ions into excitable cells and are also involved in a variety of calcium-dependent processes, including muscle contraction, gene expression, cell motility, cell division and cell death. The isoform alpha-1S gives rise to L-type calcium currents. Long-lasting (L-type) calcium channels belong to the 'high-voltage activated' (HVA) group. They are blocked by dihydropyridines (DHP), phenylalkylamines, and by benzothiazepines. Calcium channels containing the alpha-1S subunit play an important role in excitation-contraction coupling in skele|tal muscle. The sequence is that of Voltage-dependent L-type calcium channel subunit alpha-1S from Aquarana catesbeiana (American bullfrog).